The chain runs to 199 residues: Peptidyl-tRNA hydrolase (199 aa).

Tyr-18 is a tRNA binding site. His-23 (proton acceptor) is an active-site residue. Residues Tyr-69, Asn-71, and Asn-117 each coordinate tRNA.

This sequence belongs to the PTH family. As to quaternary structure, monomer.

The protein resides in the cytoplasm. It catalyses the reaction an N-acyl-L-alpha-aminoacyl-tRNA + H2O = an N-acyl-L-amino acid + a tRNA + H(+). Its function is as follows. Hydrolyzes ribosome-free peptidyl-tRNAs (with 1 or more amino acids incorporated), which drop off the ribosome during protein synthesis, or as a result of ribosome stalling. Catalyzes the release of premature peptidyl moieties from peptidyl-tRNA molecules trapped in stalled 50S ribosomal subunits, and thus maintains levels of free tRNAs and 50S ribosomes. The polypeptide is Peptidyl-tRNA hydrolase (Prochlorococcus marinus (strain MIT 9515)).